Reading from the N-terminus, the 510-residue chain is Cobyric acid synthase (510 aa).

The region spanning C249–A458 is the GATase cobBQ-type domain. C336 acts as the Nucleophile in catalysis. H450 is an active-site residue.

It belongs to the CobB/CobQ family. CobQ subfamily.

Its pathway is cofactor biosynthesis; adenosylcobalamin biosynthesis. Functionally, catalyzes amidations at positions B, D, E, and G on adenosylcobyrinic A,C-diamide. NH(2) groups are provided by glutamine, and one molecule of ATP is hydrogenolyzed for each amidation. The chain is Cobyric acid synthase from Shewanella oneidensis (strain ATCC 700550 / JCM 31522 / CIP 106686 / LMG 19005 / NCIMB 14063 / MR-1).